The primary structure comprises 46 residues: Protein PsbN (46 aa).

A helical membrane pass occupies residues 5-27; it reads TLVTLFVSGLLMSFTGYALYTAF.

The protein belongs to the PsbN family.

It is found in the plastid membrane. In terms of biological role, may play a role in photosystem I and II biogenesis. This chain is Protein PsbN, found in Cuscuta obtusiflora (Peruvian dodder).